A 147-amino-acid polypeptide reads, in one-letter code: Methylglyoxal synthase (147 aa).

One can recognise an MGS-like domain in the interval 1-147 (MKGQRNIGMV…TPYVKRLGAK (147 aa)). Residues H12, K16, 38 to 41 (TGTT), and 59 to 60 (SG) contribute to the substrate site. D65 functions as the Proton donor/acceptor in the catalytic mechanism. H92 contributes to the substrate binding site.

Belongs to the methylglyoxal synthase family.

It catalyses the reaction dihydroxyacetone phosphate = methylglyoxal + phosphate. In terms of biological role, catalyzes the formation of methylglyoxal from dihydroxyacetone phosphate. This Oleidesulfovibrio alaskensis (strain ATCC BAA-1058 / DSM 17464 / G20) (Desulfovibrio alaskensis) protein is Methylglyoxal synthase.